Reading from the N-terminus, the 166-residue chain is Ureidoglycolate lyase (166 aa).

The protein belongs to the ureidoglycolate lyase family. As to quaternary structure, homodimer. Ni(2+) serves as cofactor.

It carries out the reaction (S)-ureidoglycolate = urea + glyoxylate. The protein operates within nitrogen metabolism; (S)-allantoin degradation. Its function is as follows. Catalyzes the catabolism of the allantoin degradation intermediate (S)-ureidoglycolate, generating urea and glyoxylate. Involved in the utilization of allantoin as nitrogen source. This Agrobacterium fabrum (strain C58 / ATCC 33970) (Agrobacterium tumefaciens (strain C58)) protein is Ureidoglycolate lyase.